Consider the following 548-residue polypeptide: Probable malate:quinone oxidoreductase (548 aa).

The tract at residues tyrosine 520–leucine 548 is disordered. The segment covering proline 530–lysine 541 has biased composition (low complexity).

This sequence belongs to the MQO family. The cofactor is FAD.

It catalyses the reaction (S)-malate + a quinone = a quinol + oxaloacetate. It participates in carbohydrate metabolism; tricarboxylic acid cycle; oxaloacetate from (S)-malate (quinone route): step 1/1. This is Probable malate:quinone oxidoreductase from Shigella dysenteriae serotype 1 (strain Sd197).